The chain runs to 491 residues: MPTPNAASPQAKGFRRAVSELDAKQAEAIMSPRFVGRRQSLIQDARKEREKAEAAASSSESAEAAAWLERDGEAVLTLLFALPPTRPPALTRAIKVFETFEAHLHHLETRPAQPLRAGSPPLECFVRCEVPGPVVPALLSALRRVAEDVRAAGESKVLWFPRKVSELDKCHHLVTKFDPDLDLDHPGFSDQAYRQRRKLIAEIAFQYKQGDPIPHVEYTAEETATWKEVYSTLRGLYPTHACREHLEAFELLERFCGYREDRIPQLEDVSRFLKERTGFQLRPAAGLLSARDFLASLAFRVFQCTQYIRHASSPMHSPEPECCHELLGHVPMLADRTFAQFSQDIGLASLGVSDEEIEKLSTLYWFTVEFGLCKQNGEVKAYGAGLLSSYGELLHSLSEEPEIRAFDPDAAAVQPYQDQTYQPVYFVSESFSDAKDKLRSYASRIQRPFSVKFDPYTLAIDVLDSPHAIRHALDGVQDEMQALAHALNAIS.

Position 19 is a phosphoserine; by CaMK2 (Ser19). The residue at position 31 (Ser31) is a Phosphoserine. Ser40 bears the Phosphoserine; by CaMK2 and PKA mark. Positions 324, 329, and 369 each coordinate Fe cation. Residue Ser465 is modified to Phosphoserine.

The protein belongs to the biopterin-dependent aromatic amino acid hydroxylase family. In terms of assembly, homotetramer. Interacts (when phosphorylated at Ser-19) with YWHAG; one YWHAG dimer bounds to one TH tetramer and this interaction may influence the phosphorylation and dephosphorylation of other sites. Interacts with NT5DC2; the interaction results in reduced phosphorylation and decreased catalytic activity of TH. It depends on Fe(2+) as a cofactor. Phosphorylated on Ser-19, Ser-31 and Ser-40 by several protein kinases with different site specificities. Phosphorylation at Ser-31 and Ser-40 leads to an increase of TH activity. Phosphorylation at Ser-40 activates the enzyme and also counteracts the feedback inhibition of TH by catecholamines. Phosphorylation of Ser-19 and Ser-31 triggers the proteasomal degradation of TH through the ubiquitin-proteasome pathway. Phosphorylation at Ser-31 facilitates transport of TH from the soma to the nerve terminals via the microtubule network. Phosphorylation at Ser-19 induces the high-affinity binding to the 14-3-3 protein YWHAG; this interaction may influence the phosphorylation and dephosphorylation of other sites. Ser-19 increases the phosphorylation at Ser-40 in a hierarchical manner, leading to increased activity.

The protein resides in the cytoplasm. It is found in the perinuclear region. The protein localises to the nucleus. It localises to the cell projection. Its subcellular location is the axon. The protein resides in the cytoplasmic vesicle. It is found in the secretory vesicle. The protein localises to the synaptic vesicle. The enzyme catalyses (6R)-L-erythro-5,6,7,8-tetrahydrobiopterin + L-tyrosine + O2 = (4aS,6R)-4a-hydroxy-L-erythro-5,6,7,8-tetrahydrobiopterin + L-dopa. Its pathway is catecholamine biosynthesis; dopamine biosynthesis; dopamine from L-tyrosine: step 1/2. With respect to regulation, inhibited in feedback fashion by the catecholamine neurotransmitters, especially by dopamine in competition with tetrahydrobiopterin. Phosphorylation of several Ser/Thr residues in the N-terminus regulates the catalytic activity. Ser-31 and Ser-40 are readily phosphorylated to activate the catalytic activity. A Cysteine modification induced by N-ethylmaleimide (NEM), inhibits tyrosine 3-monooxygenase activity through the modification of the Cys-170. Its function is as follows. Catalyzes the conversion of L-tyrosine to L-dihydroxyphenylalanine (L-Dopa), the rate-limiting step in the biosynthesis of catecholamines, dopamine, noradrenaline, and adrenaline. Uses tetrahydrobiopterin and molecular oxygen to convert tyrosine to L-Dopa. In addition to tyrosine, is able to catalyze the hydroxylation of phenylalanine and tryptophan with lower specificity. Positively regulates the regression of retinal hyaloid vessels during postnatal development. This chain is Tyrosine 3-monooxygenase (TH), found in Bos taurus (Bovine).